A 661-amino-acid polypeptide reads, in one-letter code: MQSSVYFDQTGSFASSSDNVVSSTTNTHNISPSHRSSLNLNTTSHPHEASGRGSASGELYLNDTNSPLAISSMLNTLALGSMPQDIASSNISNHDNNIKGSYSLKLSNVAKDITLRECYAIFALAEGVKSIELQKKNSSSSITSASLEDENDIFIIARFELLNLAINYAVILNSKNELFGPSFPNKTTVEIIDDTTKNLVSFPSSAIFNDTSRLNKSNSGMKRPSLLSQRSRFSFSDPFSNDSPLSQQQSQQQQQQPQQPQQHSTQKHSPQQCNQQQVNSSIPLSSQGQVIGLHSNHSHQDLSVESTIQTSDIGKSFLLRDNTEINEKIWGTSGIPSSINGYMSTPQPSTPTLEWGNTSASQHGSSFFLPSAASTAIAPTNSNTSANANASSNNGASNNGANQALSASSQQPMMQIGNTINTSLTSSNSLPPYGLMSSQSQHISNMVNTSDMNITPQKQNRFMQQPQPEHMYPVNQSNTPQKVPPARLSSSRNSHKNNSTTSLSSNITGSASISQADLSLLARIPPPANPADQNPPCNTLYVGNLPSDATEQELRQLFSGQEGFRRLSFRNKNTTSNGHSHGPMCFVEFDDVSFATRALAELYGRQLPRSTVSSKGGIRLSFSKNPLGVRGPNSRRGGSGNPNPNVNMLSSYNSNVGHIKN.

Residues 14-31 (ASSSDNVVSSTTNTHNIS) show a composition bias toward low complexity. A disordered region spans residues 14-58 (ASSSDNVVSSTTNTHNISPSHRSSLNLNTTSHPHEASGRGSASGE). Polar residues predominate over residues 32 to 44 (PSHRSSLNLNTTS). Position 231 is a phosphoserine (Ser231). 3 stretches are compositionally biased toward low complexity: residues 237-272 (DPFS…SPQQ), 383-409 (NTSA…SASS), and 496-508 (KNNS…SNIT). Disordered regions lie at residues 237–280 (DPFS…QVNS), 383–410 (NTSA…ASSQ), 469–508 (EHMY…SNIT), and 613–661 (SSKG…HIKN). One can recognise an RRM domain in the interval 538-625 (NTLYVGNLPS…GGIRLSFSKN (88 aa)). Over residues 628-647 (GVRGPNSRRGGSGNPNPNVN) the composition is skewed to low complexity. A compositionally biased stretch (polar residues) spans 648-661 (MLSSYNSNVGHIKN).

Its function is as follows. Involved in size control and cell cycle. The polypeptide is Protein WHI3 (WHI3) (Saccharomyces cerevisiae (strain ATCC 204508 / S288c) (Baker's yeast)).